The following is a 49-amino-acid chain: Large ribosomal subunit protein bL33 (49 aa).

The protein belongs to the bacterial ribosomal protein bL33 family.

The sequence is that of Large ribosomal subunit protein bL33 from Nitratidesulfovibrio vulgaris (strain ATCC 29579 / DSM 644 / CCUG 34227 / NCIMB 8303 / VKM B-1760 / Hildenborough) (Desulfovibrio vulgaris).